The primary structure comprises 552 residues: Asparagine--tRNA ligase, cytoplasmic (552 aa).

The segment at 1-23 is disordered; it reads MSQVYVNEKTGADSTDVSGSEQQ. The span at 12-23 shows a compositional bias: polar residues; that stretch reads ADSTDVSGSEQQ.

Belongs to the class-II aminoacyl-tRNA synthetase family.

It is found in the cytoplasm. It catalyses the reaction tRNA(Asn) + L-asparagine + ATP = L-asparaginyl-tRNA(Asn) + AMP + diphosphate + H(+). The polypeptide is Asparagine--tRNA ligase, cytoplasmic (DED81) (Debaryomyces hansenii (strain ATCC 36239 / CBS 767 / BCRC 21394 / JCM 1990 / NBRC 0083 / IGC 2968) (Yeast)).